Reading from the N-terminus, the 458-residue chain is UDP-N-acetylmuramate--L-alanine ligase (458 aa).

118–124 (GTHGKTT) contributes to the ATP binding site.

It belongs to the MurCDEF family.

Its subcellular location is the cytoplasm. It catalyses the reaction UDP-N-acetyl-alpha-D-muramate + L-alanine + ATP = UDP-N-acetyl-alpha-D-muramoyl-L-alanine + ADP + phosphate + H(+). It participates in cell wall biogenesis; peptidoglycan biosynthesis. Functionally, cell wall formation. This chain is UDP-N-acetylmuramate--L-alanine ligase, found in Clostridium novyi (strain NT).